A 186-amino-acid polypeptide reads, in one-letter code: Ribosome-recycling factor (186 aa).

Belongs to the RRF family.

It localises to the cytoplasm. Functionally, responsible for the release of ribosomes from messenger RNA at the termination of protein biosynthesis. May increase the efficiency of translation by recycling ribosomes from one round of translation to another. The polypeptide is Ribosome-recycling factor (Bartonella quintana (strain Toulouse) (Rochalimaea quintana)).